The primary structure comprises 501 residues: MGCGLRKLEDPDDSSPGKIFSTLKRPQVETKTEFAYEYVLLDFTLQASSNPEVIKINSILDIVTKVEDYYLKGYIVGAIHPVIQPVGQRKHLPASCLYRVVLSRLKLSPKNSAAPSGQRRPRLVIEECPLTSEAQTNDAAKELIEKINFAAKRGMKFVGFISQPYSPYKFCNGTNHDGDIESMLHVRHSSDENCRSWNEGTLSGQSSESGIEEELHHESGQYPMEQNGSPSSSKSRKGEASDNKLYTVFNAFDDDSTSWTYQEGILSMKVTRKGSVISTLDADWLELTTFYYKQGLSLIDSFVFWETSKGEHLPKSLEGFFIYEEEGSGVPGSSRKGNDAIVVEQWTVIEGCEIKTDYGPLLHTLAEFGWLLTSVLPTPVLRHDSEGNLATKQIVFLQRPVMWNSAAQTTDKKASRRIKGEDKNKATSRSIGLDTTTPQPAESRHPPEECRLSPSRECWTKEGRLAQHNSFSGFSSSDSVLRELDDGQFDQEDGVTQVTCM.

2 disordered regions span residues M1–F20 and S196–G238. A lipid anchor (N-myristoyl glycine) is attached at G2. C3 carries S-palmitoyl cysteine lipidation. A compositionally biased stretch (polar residues) spans M224–S233. S405 carries the post-translational modification Phosphoserine. The disordered stretch occupies residues A407–P454. The residue at position 409 (T409) is a Phosphothreonine. The span at T410–K425 shows a compositional bias: basic and acidic residues. Residues T427–P440 are compositionally biased toward polar residues. A Phosphoserine modification is found at S430. Residues E442–R451 are compositionally biased toward basic and acidic residues.

It belongs to the raftlin family.

The protein resides in the cell membrane. Upon bacterial lipopolysaccharide stimulation, mediates clathrin-dependent internalization of TLR4 in dendritic cells, resulting in activation of TICAM1-mediated signaling and subsequent IFNB1 production. May regulate B-cell antigen receptor mediated-signaling. The sequence is that of Raftlin-2 (RFTN2) from Pongo abelii (Sumatran orangutan).